Consider the following 213-residue polypeptide: Phosphatidylcholine transfer protein (213 aa).

Methionine 1 is subject to N-acetylmethionine. The region spanning 1–212 (MDPGAGAFSE…MVKACQNYKK (212 aa)) is the START domain. Residues tyrosine 72 and arginine 78 each contribute to the a 1,2-diacyl-sn-glycero-3-phosphocholine site. Serine 139 is subject to Phosphoserine. Glutamine 157 lines the a 1,2-diacyl-sn-glycero-3-phosphocholine pocket. The tract at residues 171-176 (VFMYYF) is part of the binding site for phosphatidylcholine.

In terms of assembly, interacts with ACOT13/THEM2.

The protein resides in the cytoplasm. In terms of biological role, catalyzes the transfer of phosphatidylcholine between membranes. Binds phosphatidylcholine in a tight 1:1 stoichiometric complex. The sequence is that of Phosphatidylcholine transfer protein (PCTP) from Bos taurus (Bovine).